The sequence spans 225 residues: Cytidylate kinase (225 aa).

Residue 12-20 coordinates ATP; sequence GPSGAGKGT.

This sequence belongs to the cytidylate kinase family. Type 1 subfamily.

It localises to the cytoplasm. The enzyme catalyses CMP + ATP = CDP + ADP. It catalyses the reaction dCMP + ATP = dCDP + ADP. This chain is Cytidylate kinase, found in Stenotrophomonas maltophilia (strain R551-3).